Consider the following 84-residue polypeptide: Exodeoxyribonuclease 7 small subunit (84 aa).

Belongs to the XseB family. In terms of assembly, heterooligomer composed of large and small subunits.

The protein localises to the cytoplasm. The enzyme catalyses Exonucleolytic cleavage in either 5'- to 3'- or 3'- to 5'-direction to yield nucleoside 5'-phosphates.. Functionally, bidirectionally degrades single-stranded DNA into large acid-insoluble oligonucleotides, which are then degraded further into small acid-soluble oligonucleotides. This is Exodeoxyribonuclease 7 small subunit from Azoarcus sp. (strain BH72).